The following is a 197-amino-acid chain: Ribonuclease HII (197 aa).

The 187-residue stretch at 11 to 197 (HLIAGVDEVG…FAPVKKILGL (187 aa)) folds into the RNase H type-2 domain. Asp-17, Glu-18, and Asp-109 together coordinate a divalent metal cation.

This sequence belongs to the RNase HII family. Requires Mn(2+) as cofactor. Mg(2+) is required as a cofactor.

Its subcellular location is the cytoplasm. It carries out the reaction Endonucleolytic cleavage to 5'-phosphomonoester.. Its function is as follows. Endonuclease that specifically degrades the RNA of RNA-DNA hybrids. The chain is Ribonuclease HII from Actinobacillus pleuropneumoniae serotype 7 (strain AP76).